The primary structure comprises 483 residues: Xylulose kinase (483 aa).

79-80 (MH) lines the substrate pocket.

This sequence belongs to the FGGY kinase family.

It carries out the reaction D-xylulose + ATP = D-xylulose 5-phosphate + ADP + H(+). Its function is as follows. Catalyzes the phosphorylation of D-xylulose to D-xylulose 5-phosphate. This is Xylulose kinase from Staphylococcus xylosus.